Consider the following 319-residue polypeptide: High mobility group B protein 10 (319 aa).

Positions 1–13 (MSTDISPPYSQTH) are enriched in polar residues. A disordered region spans residues 1–25 (MSTDISPPYSQTHVEPVNGYPSDNK). The 92-residue stretch at 40-131 (VRNSALFWEK…FLFQLEHVYY (92 aa)) folds into the ARID domain. Positions 203–220 (PSQSQQTMETPSAIVQSS) are enriched in polar residues. The interval 203-230 (PSQSQQTMETPSAIVQSSQRRHRKKSKL) is disordered. Positions 238–305 (PKCHRSGYNF…RYRIEMLEYK (68 aa)) form a DNA-binding region, HMG box.

In terms of tissue distribution, ubiquitously expressed.

The protein localises to the nucleus. In terms of biological role, binds preferentially DNA with A/T-rich content. The polypeptide is High mobility group B protein 10 (HMGB10) (Arabidopsis thaliana (Mouse-ear cress)).